The chain runs to 483 residues: ATP-dependent RNA helicase DDX25 (483 aa).

Threonine 49 bears the Phosphothreonine mark. A Nuclear export signal motif is present at residues 61–74; sequence LAANSLLNKLIRQS. The Q motif motif lies at 97–125; that stretch reads KTFEELRLKEELLKGIYAMGFNRPSKIQE. The short motif at 100–114 is the Nuclear localization signal element; sequence EELRLKEELLKGIYA. The Helicase ATP-binding domain maps to 130-300; it reads MMLAHPPQNL…ERIIPDPNVI (171 aa). Residue 143 to 150 participates in ATP binding; the sequence is SQSGTGKT. The DEAD box signature appears at 247–250; the sequence is DEAD. In terms of domain architecture, Helicase C-terminal spans 311-478; it reads NIRQYYVLCE…QLDPEDMDEI (168 aa).

Belongs to the DEAD box helicase family. Phosphorylated on threonine residues. The phosphorylated form is found in the cytoplasm but not in the nucleus. As to expression, isoform 1 is expressed in germ cells. Isoform 2 is highly expressed in Leydig cells and weakly expressed in the pituitary and hypothalamus. Isoform 3 is weakly expressed only in germ cells.

Its subcellular location is the cytoplasm. It is found in the nucleus. It carries out the reaction ATP + H2O = ADP + phosphate + H(+). Its function is as follows. ATP-dependent RNA helicase. Required for mRNA export and translation regulation during spermatid development. This chain is ATP-dependent RNA helicase DDX25 (Ddx25), found in Rattus norvegicus (Rat).